A 729-amino-acid polypeptide reads, in one-letter code: Glutamine synthetase (729 aa).

The GS beta-grasp domain maps to 85-174; sequence THYTHWFQPL…IPTIFISYTG (90 aa). The 437-residue stretch at 179–615 folds into the GS catalytic domain; it reads YKTPLLKALA…VLGDLAINHI (437 aa). Residues glutamate 215, glutamate 217, glutamate 286, and glutamate 293 each coordinate Mg(2+). L-glutamate contacts are provided by residues 337 to 338 and glycine 338; that span reads NG. Histidine 342 provides a ligand contact to Mg(2+). Residues serine 346 and arginine 458 each contribute to the ATP site. Arginine 458 provides a ligand contact to L-glutamate.

The protein belongs to the glutamine synthetase family. As to quaternary structure, homohexamer. It depends on Mg(2+) as a cofactor.

Its subcellular location is the cytoplasm. The catalysed reaction is L-glutamate + NH4(+) + ATP = L-glutamine + ADP + phosphate + H(+). Its activity is regulated as follows. Inhibited by L-histidine (46%), L-arginine (38%) and L-methionine-DL-sulphoximine. The activity of this enzyme is not controlled by adenylation. Functionally, catalyzes the ATP-dependent biosynthesis of glutamine from glutamate and ammonia. The chain is Glutamine synthetase from Bacteroides fragilis (strain YCH46).